A 397-amino-acid polypeptide reads, in one-letter code: 2,3-bisphosphoglycerate-independent phosphoglycerate mutase (397 aa).

It belongs to the BPG-independent phosphoglycerate mutase family. A-PGAM subfamily.

It catalyses the reaction (2R)-2-phosphoglycerate = (2R)-3-phosphoglycerate. The protein operates within carbohydrate degradation; glycolysis; pyruvate from D-glyceraldehyde 3-phosphate: step 3/5. Its function is as follows. Catalyzes the interconversion of 2-phosphoglycerate and 3-phosphoglycerate. This Methanosarcina mazei (strain ATCC BAA-159 / DSM 3647 / Goe1 / Go1 / JCM 11833 / OCM 88) (Methanosarcina frisia) protein is 2,3-bisphosphoglycerate-independent phosphoglycerate mutase (apgM).